The sequence spans 360 residues: Histidinol-phosphate aminotransferase (360 aa).

Position 211 is an N6-(pyridoxal phosphate)lysine (lysine 211).

It belongs to the class-II pyridoxal-phosphate-dependent aminotransferase family. Histidinol-phosphate aminotransferase subfamily. As to quaternary structure, homodimer. It depends on pyridoxal 5'-phosphate as a cofactor.

It catalyses the reaction L-histidinol phosphate + 2-oxoglutarate = 3-(imidazol-4-yl)-2-oxopropyl phosphate + L-glutamate. The protein operates within amino-acid biosynthesis; L-histidine biosynthesis; L-histidine from 5-phospho-alpha-D-ribose 1-diphosphate: step 7/9. The polypeptide is Histidinol-phosphate aminotransferase (Sodalis glossinidius (strain morsitans)).